The primary structure comprises 187 residues: High-affinity copper transporter ctrA2 (187 aa).

The next 2 helical transmembrane spans lie at 44-64 and 137-157; these read YAGTCIFLVVLAIINRCLVAF and AAIFLCITGVSYLLMLAVMTM.

It belongs to the copper transporter (Ctr) (TC 1.A.56) family. SLC31A subfamily.

The protein resides in the cell membrane. The enzyme catalyses Cu(2+)(in) = Cu(2+)(out). In terms of biological role, high-affinity copper transporter of plasma membrane that mediates copper uptake under low copper conditions. The mechanism driving the transmembrane transport of copper has still to be determined. Acts as a potential virulence factor. In Aspergillus fumigatus (strain ATCC MYA-4609 / CBS 101355 / FGSC A1100 / Af293) (Neosartorya fumigata), this protein is High-affinity copper transporter ctrA2.